Here is a 284-residue protein sequence, read N- to C-terminus: 2-dehydro-3-deoxyphosphooctonate aldolase (284 aa).

Belongs to the KdsA family.

The protein localises to the cytoplasm. It catalyses the reaction D-arabinose 5-phosphate + phosphoenolpyruvate + H2O = 3-deoxy-alpha-D-manno-2-octulosonate-8-phosphate + phosphate. The protein operates within carbohydrate biosynthesis; 3-deoxy-D-manno-octulosonate biosynthesis; 3-deoxy-D-manno-octulosonate from D-ribulose 5-phosphate: step 2/3. It functions in the pathway bacterial outer membrane biogenesis; lipopolysaccharide biosynthesis. This Pectobacterium atrosepticum (strain SCRI 1043 / ATCC BAA-672) (Erwinia carotovora subsp. atroseptica) protein is 2-dehydro-3-deoxyphosphooctonate aldolase.